The following is a 71-amino-acid chain: Small ribosomal subunit protein bS18 (71 aa).

Belongs to the bacterial ribosomal protein bS18 family. Part of the 30S ribosomal subunit. Forms a tight heterodimer with protein bS6.

Its function is as follows. Binds as a heterodimer with protein bS6 to the central domain of the 16S rRNA, where it helps stabilize the platform of the 30S subunit. The chain is Small ribosomal subunit protein bS18 from Synechococcus sp. (strain JA-2-3B'a(2-13)) (Cyanobacteria bacterium Yellowstone B-Prime).